The chain runs to 240 residues: Small ribosomal subunit protein uS2c (240 aa).

This sequence belongs to the universal ribosomal protein uS2 family.

It is found in the plastid. The protein resides in the chloroplast. This is Small ribosomal subunit protein uS2c (rps2) from Euglena gracilis.